The chain runs to 284 residues: MSARDSDHLNGQCFPHPGIGHGTVVTVRITVLGCSGSVVGPDSPASGYLLRAPDTPPLVLDFGGGVLGALQRHADPGSVHVLLSHLHADHCLDMPGLFVWRRYHPTRPVGKALLYGPDDTWLRLGAASSPYGGEIDDCSDIFDVRHWVDGEPVPLGALMIMPRLVAHPTESYGLRITDPSGASLVYSGDTGSCDQLVELARGADVFLCEASWTHSPDRPPNLHLSGTEAGRAAAQASVRELLLTHIPPWTSREDVISEAKAEFDGPVHAVVSGETFDIQAPERV.

It belongs to the AtsA family.

This is an uncharacterized protein from Mycobacterium leprae (strain TN).